Reading from the N-terminus, the 50-residue chain is Small nuclear ribonucleoprotein Sm D2 (50 aa).

A disordered region spans residues 1–36; it reads MSLLNKPKSEMTPEELQKREEEEFNTGPLSVXTQSX. At serine 2 the chain carries N-acetylserine. Glycyl lysine isopeptide (Lys-Gly) (interchain with G-Cter in SUMO2) cross-links involve residues lysine 6 and lysine 8. Positions 7–21 are enriched in basic and acidic residues; the sequence is PKSEMTPEELQKREE. The residue at position 9 (serine 9) is a Phosphoserine. Threonine 12 is subject to Phosphothreonine.

It belongs to the snRNP core protein family. Core component of the spliceosomal U1, U2, U4 and U5 small nuclear ribonucleoproteins (snRNPs), the building blocks of the spliceosome. Most spliceosomal snRNPs contain a common set of Sm proteins, SNRPB, SNRPD1, SNRPD2, SNRPD3, SNRPE, SNRPF and SNRPG that assemble in a heptameric protein ring on the Sm site of the small nuclear RNA to form the core snRNP. Component of the U1 snRNP. The U1 snRNP is composed of the U1 snRNA and the 7 core Sm proteins SNRPB, SNRPD1, SNRPD2, SNRPD3, SNRPE, SNRPF and SNRPG, and at least three U1 snRNP-specific proteins SNRNP70/U1-70K, SNRPA/U1-A and SNRPC/U1-C. Component of the U4/U6-U5 tri-snRNP complex composed of the U4, U6 and U5 snRNAs and at least PRPF3, PRPF4, PRPF6, PRPF8, PRPF31, SNRNP200, TXNL4A, SNRNP40, SNRPB, SNRPD1, SNRPD2, SNRPD3, SNRPE, SNRPF, SNRPG, DDX23, CD2BP2, PPIH, SNU13, EFTUD2, SART1 and USP39, plus LSM2, LSM3, LSM4, LSM5, LSM6, LSM7 and LSM8. Component of the minor spliceosome, which splices U12-type introns. Part of the SMN-Sm complex that contains SMN1, GEMIN2/SIP1, DDX20/GEMIN3, GEMIN4, GEMIN5, GEMIN6, GEMIN7, GEMIN8, STRAP/UNRIP and the Sm proteins SNRPB, SNRPD1, SNRPD2, SNRPD3, SNRPE, SNRPF and SNRPG; catalyzes core snRNPs assembly. Forms a 6S pICln-Sm complex composed of CLNS1A/pICln, SNRPD1, SNRPD2, SNRPE, SNRPF and SNRPG; ring-like structure where CLNS1A/pICln mimics additional Sm proteins and which is unable to assemble into the core snRNP. Interacts with SMN1; the interaction is direct. Interacts with GEMIN2; the interaction is direct. Interacts with SNRPD1; the interaction is direct. Interacts with SNRPF; the interaction is direct.

It localises to the cytoplasm. The protein localises to the cytosol. It is found in the nucleus. In terms of biological role, plays a role in pre-mRNA splicing as a core component of the spliceosomal U1, U2, U4 and U5 small nuclear ribonucleoproteins (snRNPs), the building blocks of the spliceosome. Component of both the pre-catalytic spliceosome B complex and activated spliceosome C complexes. As a component of the minor spliceosome, involved in the splicing of U12-type introns in pre-mRNAs. The sequence is that of Small nuclear ribonucleoprotein Sm D2 (SNRPD2) from Sus scrofa (Pig).